The primary structure comprises 691 residues: Gex-3-interacting protein 13 (691 aa).

2 disordered regions span residues 18–97 and 171–195; these read TASL…SAHL and PASPCTTAASAPSVESTPTKRKRQR. Over residues 31-46 the composition is skewed to low complexity; sequence SSFTTTSESTSPPYSS. The segment covering 47-57 has biased composition (basic and acidic residues); sequence SEHHSPTDQRT. The segment covering 58–79 has biased composition (polar residues); the sequence is ETPTSDSGNASFSPENVATSFE. Residues 171-183 show a composition bias toward low complexity; it reads PASPCTTAASAPS. 2 BED-type zinc fingers span residues 194–242 and 424–473; these read QRRN…YEKV and LRRH…YEKV. Residues Cys212, Cys215, His230, His235, Cys443, Cys446, His461, and His466 each contribute to the Zn(2+) site.

As to quaternary structure, interacts with gex-3.

This chain is Gex-3-interacting protein 13 (gei-13), found in Caenorhabditis elegans.